We begin with the raw amino-acid sequence, 189 residues long: uncharacterized protein (189 aa).

The signal sequence occupies residues 1 to 23 (MVPPKPALWALLLALLGTAPSRA). Asn-72 carries an N-linked (GlcNAc...) asparagine glycan.

This is an uncharacterized protein from Homo sapiens (Human).